A 197-amino-acid chain; its full sequence is Guanylate kinase (197 aa).

The region spanning 10–187 (GSLFIVSAPA…AYQVLRSILI (178 aa)) is the Guanylate kinase-like domain. Residue 17-24 (APAGTGKT) coordinates ATP.

This sequence belongs to the guanylate kinase family.

It is found in the cytoplasm. The enzyme catalyses GMP + ATP = GDP + ADP. Essential for recycling GMP and indirectly, cGMP. The chain is Guanylate kinase from Protochlamydia amoebophila (strain UWE25).